The following is a 349-amino-acid chain: Ferredoxin--NADP reductase 1 (349 aa).

FAD-binding residues include glutamate 36, lysine 44, tyrosine 48, valine 88, leucine 123, aspartate 290, and serine 331.

Belongs to the ferredoxin--NADP reductase type 2 family. Homodimer. FAD is required as a cofactor.

It carries out the reaction 2 reduced [2Fe-2S]-[ferredoxin] + NADP(+) + H(+) = 2 oxidized [2Fe-2S]-[ferredoxin] + NADPH. The protein is Ferredoxin--NADP reductase 1 of Bacillus cytotoxicus (strain DSM 22905 / CIP 110041 / 391-98 / NVH 391-98).